The primary structure comprises 313 residues: Holliday junction branch migration complex subunit RuvB (313 aa).

Positions 1–157 are large ATPase domain (RuvB-L); sequence MNEYIGQGNI…FGLIMELDFY (157 aa). ATP is bound by residues Gly38, Lys41, Thr42, Thr43, 104–106, Arg147, Tyr157, and Arg194; that span reads EDF. Thr42 serves as a coordination point for Mg(2+). The small ATPAse domain (RuvB-S) stretch occupies residues 158–228; it reads SIDELSKIIE…MVEEIMFLLG (71 aa). A head domain (RuvB-H) region spans residues 231-313; that stretch reads KEGLDELDRK…KVQRGLFDEE (83 aa). The DNA site is built by Arg286 and Arg291.

Belongs to the RuvB family. Homohexamer. Forms an RuvA(8)-RuvB(12)-Holliday junction (HJ) complex. HJ DNA is sandwiched between 2 RuvA tetramers; dsDNA enters through RuvA and exits via RuvB. An RuvB hexamer assembles on each DNA strand where it exits the tetramer. Each RuvB hexamer is contacted by two RuvA subunits (via domain III) on 2 adjacent RuvB subunits; this complex drives branch migration. In the full resolvosome a probable DNA-RuvA(4)-RuvB(12)-RuvC(2) complex forms which resolves the HJ.

The protein localises to the cytoplasm. The catalysed reaction is ATP + H2O = ADP + phosphate + H(+). Functionally, the RuvA-RuvB-RuvC complex processes Holliday junction (HJ) DNA during genetic recombination and DNA repair, while the RuvA-RuvB complex plays an important role in the rescue of blocked DNA replication forks via replication fork reversal (RFR). RuvA specifically binds to HJ cruciform DNA, conferring on it an open structure. The RuvB hexamer acts as an ATP-dependent pump, pulling dsDNA into and through the RuvAB complex. RuvB forms 2 homohexamers on either side of HJ DNA bound by 1 or 2 RuvA tetramers; 4 subunits per hexamer contact DNA at a time. Coordinated motions by a converter formed by DNA-disengaged RuvB subunits stimulates ATP hydrolysis and nucleotide exchange. Immobilization of the converter enables RuvB to convert the ATP-contained energy into a lever motion, pulling 2 nucleotides of DNA out of the RuvA tetramer per ATP hydrolyzed, thus driving DNA branch migration. The RuvB motors rotate together with the DNA substrate, which together with the progressing nucleotide cycle form the mechanistic basis for DNA recombination by continuous HJ branch migration. Branch migration allows RuvC to scan DNA until it finds its consensus sequence, where it cleaves and resolves cruciform DNA. The polypeptide is Holliday junction branch migration complex subunit RuvB (Thermosipho melanesiensis (strain DSM 12029 / CIP 104789 / BI429)).